The sequence spans 541 residues: Tryptophan N-monooxygenase 1 (541 aa).

Residues 21 to 41 (FSTLYLLSTLQAFVAITLVML) traverse the membrane as a helical segment. Residue C477 participates in heme binding.

The protein belongs to the cytochrome P450 family. Heme is required as a cofactor. In terms of tissue distribution, found in all tissues tested. Highest expression in roots, and low expression in stem.

Its subcellular location is the membrane. The enzyme catalyses L-tryptophan + 2 reduced [NADPH--hemoprotein reductase] + 2 O2 = (E)-(indol-3-yl)acetaldehyde oxime + 2 oxidized [NADPH--hemoprotein reductase] + CO2 + 3 H2O + 2 H(+). Converts tryptophan to indole-3-acetaldoxime, a precursor for tryptophan-derived glucosinolates and indole-3-acetic acid (IAA). Involved in the biosynthetic pathway to 4-hydroxyindole-3-carbonyl nitrile (4-OH-ICN), a cyanogenic metabolite required for inducible pathogen defense. The chain is Tryptophan N-monooxygenase 1 (CYP79B2) from Arabidopsis thaliana (Mouse-ear cress).